The chain runs to 175 residues: MSTIAKDQTQINEKIRAKELRLIGQDGEQIGVKSKREALEMAERVDLDLVVVAPNAKPPVARIMDYGKYKFEQQKKEKEMKKKQKVINVKELRLSPTIEEHDFQTKLKNGRKFLSKGDKCKVSIRFRGRAITHKEIGQRVLEKFADECKDIATVEQKPKMEGRQMFIMLAPINEK.

This sequence belongs to the IF-3 family. Monomer.

It localises to the cytoplasm. In terms of biological role, IF-3 binds to the 30S ribosomal subunit and shifts the equilibrium between 70S ribosomes and their 50S and 30S subunits in favor of the free subunits, thus enhancing the availability of 30S subunits on which protein synthesis initiation begins. The polypeptide is Translation initiation factor IF-3 (Staphylococcus epidermidis (strain ATCC 35984 / DSM 28319 / BCRC 17069 / CCUG 31568 / BM 3577 / RP62A)).